Reading from the N-terminus, the 243-residue chain is Orotidine 5'-phosphate decarboxylase (243 aa).

Residues D19, K41, D69–T78, T124, R185, Q194, G214, and R215 contribute to the substrate site. The active-site Proton donor is the K71.

Belongs to the OMP decarboxylase family. Type 1 subfamily. In terms of assembly, homodimer.

The enzyme catalyses orotidine 5'-phosphate + H(+) = UMP + CO2. It participates in pyrimidine metabolism; UMP biosynthesis via de novo pathway; UMP from orotate: step 2/2. Its function is as follows. Catalyzes the decarboxylation of orotidine 5'-monophosphate (OMP) to uridine 5'-monophosphate (UMP). In Xanthomonas campestris pv. campestris (strain B100), this protein is Orotidine 5'-phosphate decarboxylase.